The following is a 204-amino-acid chain: LexA repressor (204 aa).

Residues 29–49 (RAEIADIMGFQSKNAASDHLR) constitute a DNA-binding region (H-T-H motif). Catalysis depends on for autocatalytic cleavage activity residues Ser123 and Lys160.

It belongs to the peptidase S24 family. As to quaternary structure, homodimer.

It carries out the reaction Hydrolysis of Ala-|-Gly bond in repressor LexA.. Functionally, represses a number of genes involved in the response to DNA damage (SOS response), including recA and lexA. In the presence of single-stranded DNA, RecA interacts with LexA causing an autocatalytic cleavage which disrupts the DNA-binding part of LexA, leading to derepression of the SOS regulon and eventually DNA repair. The protein is LexA repressor of Alcanivorax borkumensis (strain ATCC 700651 / DSM 11573 / NCIMB 13689 / SK2).